The primary structure comprises 279 residues: Small ribosomal subunit protein uS2 (279 aa).

A disordered region spans residues 232–279; that stretch reads RRRGTDEKPEAGVASDEPLAEWERELLEEPKKSDEPKSDEQPAAAAAE. Over residues 252 to 271 the composition is skewed to basic and acidic residues; it reads EWERELLEEPKKSDEPKSDE.

It belongs to the universal ribosomal protein uS2 family.

In Salinispora arenicola (strain CNS-205), this protein is Small ribosomal subunit protein uS2.